A 430-amino-acid chain; its full sequence is Enolase (430 aa).

(2R)-2-phosphoglycerate is bound at residue Gln-163. Glu-205 serves as the catalytic Proton donor. Asp-242, Glu-288, and Asp-315 together coordinate Mg(2+). Lys-340, Arg-369, Ser-370, and Lys-391 together coordinate (2R)-2-phosphoglycerate. The active-site Proton acceptor is the Lys-340.

The protein belongs to the enolase family. Requires Mg(2+) as cofactor.

The protein localises to the cytoplasm. It is found in the secreted. Its subcellular location is the cell surface. It catalyses the reaction (2R)-2-phosphoglycerate = phosphoenolpyruvate + H2O. The protein operates within carbohydrate degradation; glycolysis; pyruvate from D-glyceraldehyde 3-phosphate: step 4/5. In terms of biological role, catalyzes the reversible conversion of 2-phosphoglycerate (2-PG) into phosphoenolpyruvate (PEP). It is essential for the degradation of carbohydrates via glycolysis. In Onion yellows phytoplasma (strain OY-M), this protein is Enolase.